The chain runs to 179 residues: MSLKKRYREAIQPKLLKDLNFSNLHQVPKVVKVTVNRGLGEAAQNAKSLEASVEEIATITGQKPVVTRAKKAIAGFKIRQGMPIGVAVTLRGDRMYAFLERLINLALPRIRDFRGVSEKSFDGRGNYTLGVREQIIFPEISFDKIDAIRGMDITIVTTARNDEEGQALLREMGMPFRNN.

Belongs to the universal ribosomal protein uL5 family. As to quaternary structure, part of the 50S ribosomal subunit; part of the 5S rRNA/L5/L18/L25 subcomplex. Contacts the 5S rRNA and the P site tRNA. Forms a bridge to the 30S subunit in the 70S ribosome.

This is one of the proteins that bind and probably mediate the attachment of the 5S RNA into the large ribosomal subunit, where it forms part of the central protuberance. In the 70S ribosome it contacts protein S13 of the 30S subunit (bridge B1b), connecting the 2 subunits; this bridge is implicated in subunit movement. Contacts the P site tRNA; the 5S rRNA and some of its associated proteins might help stabilize positioning of ribosome-bound tRNAs. The chain is Large ribosomal subunit protein uL5 from Synechococcus sp. (strain RCC307).